Here is a 154-residue protein sequence, read N- to C-terminus: Snaclec agglucetin subunit alpha-1 (154 aa).

The first 23 residues, 1-23 (MGRFIFVSFGLLVVFLSLSGTGA), serve as a signal peptide directing secretion. 3 disulfide bridges follow: C27-C38, C55-C150, and C125-C142. One can recognise a C-type lectin domain in the interval 34–151 (YDQSCYRVFK…CGSEYAFVCK (118 aa)). N-linked (GlcNAc...) asparagine glycosylation is present at N116.

The protein belongs to the snaclec family. Heterotetramer of the subunits alpha-1, alpha-2, beta-1 and beta-2; disulfide-linked. Expressed by the venom gland.

The protein localises to the secreted. Its function is as follows. Agglucetin specifically causes platelet aggregation and surface exposure of integrin alpha-IIb/beta-3 with a GPIb-(GP1BA-) dependent manner in washed platelets. It binds to human platelets in a saturable manner, and its binding is specifically blocked by anti-GP Ib mAb. It regulates endothelial cell survival and promotes angiogenesis by activating integrin alpha-v/beta-3 signaling through FAK/phosphatidylinositol 3-kinase (PI3K)/Akt pathway. In Deinagkistrodon acutus (Hundred-pace snake), this protein is Snaclec agglucetin subunit alpha-1.